Consider the following 605-residue polypeptide: Cystathionine gamma-synthase-like enzyme iboG1 (605 aa).

Tyrosine 289 serves as a coordination point for substrate. The residue at position 393 (lysine 393) is an N6-(pyridoxal phosphate)lysine.

This sequence belongs to the trans-sulfuration enzymes family. The cofactor is pyridoxal 5'-phosphate.

The protein operates within secondary metabolite biosynthesis. In terms of biological role, cystathionine gamma-synthase-like enzyme; part of the gene cluster that mediates the biosynthesis of the psychoactive metabolites ibotenic acid and muscimol. The first committed step is glutamate hydroxylation by the 2-oxoglutarate-dependent dioxygenase iboH, and the last step is decarboxylation of ibotenic acid to muscimol by the decarboxylase iboD. The order of the intermediate reactions is somewhat ambiguous. IboA likely activates the carboxylic acid at position 5 to introduce an amide bond, and the flavin monooxygenase iboF generates the N-O bond. There are several options for the latter step. One option is that iboF directly hydroxylates the amide nitrogen formed by iboA to produce a hydroxamic acid species. Another option is that iboF hydroxylates an external N-containing compound, whose resulting N-O bond is subsequently introduced into the hydroxyglutamate scaffold. The paralogous PLP-dependent cystathionine gamma-synthase-like enzymes iboG1 and iboG2 are likely involved in substitution of the OH group at position 3 by the O-N moiety. The first cyclic intermediate is most probably tricholomic acid which is likely desaturated to ibotenic acid by the cytochrome P450 monooxygenase iboC. This is Cystathionine gamma-synthase-like enzyme iboG1 (iboG1) from Amanita muscaria (strain Koide BX008).